Here is a 463-residue protein sequence, read N- to C-terminus: Glutamate--tRNA ligase 1 (463 aa).

The 'HIGH' region signature appears at 10–20; it reads PSPTGYLHIGG. The short motif at 238 to 242 is the 'KMSKS' region element; that stretch reads KLSKR. Lysine 241 provides a ligand contact to ATP.

Belongs to the class-I aminoacyl-tRNA synthetase family. Glutamate--tRNA ligase type 1 subfamily. In terms of assembly, monomer.

The protein resides in the cytoplasm. It catalyses the reaction tRNA(Glu) + L-glutamate + ATP = L-glutamyl-tRNA(Glu) + AMP + diphosphate. Its function is as follows. Catalyzes the attachment of glutamate to tRNA(Glu) in a two-step reaction: glutamate is first activated by ATP to form Glu-AMP and then transferred to the acceptor end of tRNA(Glu). This is Glutamate--tRNA ligase 1 from Helicobacter pylori (strain ATCC 700392 / 26695) (Campylobacter pylori).